Consider the following 134-residue polypeptide: MARKTAAEAKETRQRIIDAALEVFVAQGVPDATLDQIARKAGVTRGAVYWHFNGKLEVLQAVLASRQHPLELDFTPDLGIERSWEAVVVAMLDAVHSPQSKQFSEILIYQGLDESGLIHNRMVQASDRFLQYIR.

An HTH tetR-type domain is found at 10–70 (KETRQRIIDA…AVLASRQHPL (61 aa)). A DNA-binding region (H-T-H motif) is located at residues 33–52 (TLDQIARKAGVTRGAVYWHF).

Unknown, does not seem to be involved in regulation of the ttgGHI or ttgVW operons. This is an uncharacterized protein from Pseudomonas putida (strain DOT-T1E).